A 238-amino-acid polypeptide reads, in one-letter code: 2-C-methyl-D-erythritol 4-phosphate cytidylyltransferase (238 aa).

This sequence belongs to the IspD/TarI cytidylyltransferase family. IspD subfamily.

The catalysed reaction is 2-C-methyl-D-erythritol 4-phosphate + CTP + H(+) = 4-CDP-2-C-methyl-D-erythritol + diphosphate. It functions in the pathway isoprenoid biosynthesis; isopentenyl diphosphate biosynthesis via DXP pathway; isopentenyl diphosphate from 1-deoxy-D-xylulose 5-phosphate: step 2/6. Functionally, catalyzes the formation of 4-diphosphocytidyl-2-C-methyl-D-erythritol from CTP and 2-C-methyl-D-erythritol 4-phosphate (MEP). The chain is 2-C-methyl-D-erythritol 4-phosphate cytidylyltransferase from Aliivibrio fischeri (strain ATCC 700601 / ES114) (Vibrio fischeri).